The chain runs to 325 residues: Formimidoylglutamase (325 aa).

H125, D155, H157, D159, C246, and D248 together coordinate Mn(2+).

The protein belongs to the arginase family. The cofactor is Mn(2+).

The enzyme catalyses N-formimidoyl-L-glutamate + H2O = formamide + L-glutamate. It participates in amino-acid degradation; L-histidine degradation into L-glutamate; L-glutamate from N-formimidoyl-L-glutamate (hydrolase route): step 1/1. Functionally, catalyzes the conversion of N-formimidoyl-L-glutamate to L-glutamate and formamide. In Ralstonia nicotianae (strain ATCC BAA-1114 / GMI1000) (Ralstonia solanacearum), this protein is Formimidoylglutamase.